Consider the following 515-residue polypeptide: Glucose-6-phosphate 1-dehydrogenase 6, cytoplasmic (515 aa).

NADP(+) is bound by residues 38–45, Arg-73, Tyr-155, and Lys-182; that span reads GASGDLAK. D-glucose 6-phosphate-binding positions include Lys-182, 212-216, Glu-250, and Asp-269; that span reads HYLGK. His-274 (proton acceptor) is an active-site residue. Lys-357 contributes to the NADP(+) binding site. The D-glucose 6-phosphate site is built by Lys-360 and Arg-365. Positions 366, 370, and 394 each coordinate NADP(+). Gln-396 is a binding site for D-glucose 6-phosphate. Residues 402–404, 422–424, Arg-488, and Trp-510 contribute to the NADP(+) site; these read YMK and DLS.

The protein belongs to the glucose-6-phosphate dehydrogenase family. As to quaternary structure, forms homodimer. Expressed in roots, leaves, stems, buds, flowers and siliques.

The protein localises to the cytoplasm. It localises to the cytosol. It catalyses the reaction D-glucose 6-phosphate + NADP(+) = 6-phospho-D-glucono-1,5-lactone + NADPH + H(+). The protein operates within carbohydrate degradation; pentose phosphate pathway; D-ribulose 5-phosphate from D-glucose 6-phosphate (oxidative stage): step 1/3. With respect to regulation, regulated by metabolites. Its function is as follows. Catalyzes the rate-limiting step of the oxidative pentose-phosphate pathway, which represents a route for the dissimilation of carbohydrates besides glycolysis. The main function of this enzyme is to provide reducing power (NADPH) and pentose phosphates for fatty acid and nucleic acid synthesis which are involved in membrane synthesis and cell division. The protein is Glucose-6-phosphate 1-dehydrogenase 6, cytoplasmic of Arabidopsis thaliana (Mouse-ear cress).